Consider the following 211-residue polypeptide: Probable chemoreceptor glutamine deamidase CheD (211 aa).

It belongs to the CheD family.

The enzyme catalyses L-glutaminyl-[protein] + H2O = L-glutamyl-[protein] + NH4(+). Probably deamidates glutamine residues to glutamate on methyl-accepting chemotaxis receptors (MCPs), playing an important role in chemotaxis. The sequence is that of Probable chemoreceptor glutamine deamidase CheD from Hahella chejuensis (strain KCTC 2396).